Reading from the N-terminus, the 508-residue chain is Mu-like prophage FluMu protein gp28 (508 aa).

It to phage Mu protein gp28.

The protein is Mu-like prophage FluMu protein gp28 of Haemophilus influenzae (strain ATCC 51907 / DSM 11121 / KW20 / Rd).